The primary structure comprises 99 residues: Cytochrome c-555 (99 aa).

Heme c-binding residues include cysteine 23, cysteine 26, histidine 27, and methionine 73.

Binds 1 heme c group covalently per subunit.

This is Cytochrome c-555 from Prosthecochloris aestuarii.